A 433-amino-acid chain; its full sequence is Signal recognition particle 54 kDa protein (433 aa).

Residues 100–107, 180–184, and 238–241 contribute to the GTP site; these read GLQGSGKT, DTAGR, and TKFD.

It belongs to the GTP-binding SRP family. SRP54 subfamily. Part of the signal recognition particle protein translocation system, which is composed of SRP and FtsY. Archaeal SRP consists of a 7S RNA molecule of 300 nucleotides and two protein subunits: SRP54 and SRP19.

The protein resides in the cytoplasm. The catalysed reaction is GTP + H2O = GDP + phosphate + H(+). Its function is as follows. Involved in targeting and insertion of nascent membrane proteins into the cytoplasmic membrane. Binds to the hydrophobic signal sequence of the ribosome-nascent chain (RNC) as it emerges from the ribosomes. The SRP-RNC complex is then targeted to the cytoplasmic membrane where it interacts with the SRP receptor FtsY. This is Signal recognition particle 54 kDa protein from Archaeoglobus fulgidus (strain ATCC 49558 / DSM 4304 / JCM 9628 / NBRC 100126 / VC-16).